We begin with the raw amino-acid sequence, 309 residues long: Mitochondrial import receptor subunit TOM34 (309 aa).

A Phosphoserine modification is found at serine 8. TPR repeat units follow at residues 9–42, 51–84, and 86–118; these read VEQLRAAGNQNFRNGQYGEASALYERALRLLQAR, SVLYSNRAACYLKDGNCTDCIKDCTSALALVPFS, and KPLLRRASAYEALEKYSLAYVDYKTVLQIDNSV. Residues 158–187 are disordered; that stretch reads WSSLPSENHKETAKSKSKETTATKNRVPSA. Serine 160 carries the post-translational modification Phosphoserine. Residues 164-178 are compositionally biased toward basic and acidic residues; it reads ENHKETAKSKSKETT. Serine 186 bears the Phosphoserine mark. TPR repeat units lie at residues 193–226, 227–260, and 262–294; these read ARVLKEEGNELVKKGNHKKAIEKYSESLLFSSLE, SATYSNRALCHLVLKQYKEAEKDCTEALKLDGKN, and KAFYRRAQAYKALKDYKSSLADISSLLQIEPRN. A Glycyl lysine isopeptide (Lys-Gly) (interchain with G-Cter in SUMO2) cross-link involves residue lysine 197.

This sequence belongs to the Tom34 family. As to quaternary structure, interacts with HSP90A, VCP, ATP6V1D, KIAA0665, AMPK, and DMAP1 through its TPR repeat.

The protein localises to the cytoplasm. It is found in the mitochondrion outer membrane. Functionally, plays a role in the import of cytosolically synthesized preproteins into mitochondria. Binds the mature portion of precursor proteins. Interacts with cellular components, and possesses weak ATPase activity. May be a chaperone-like protein that helps to keep newly synthesized precursors in an unfolded import compatible state. In Rattus norvegicus (Rat), this protein is Mitochondrial import receptor subunit TOM34 (Tomm34).